The chain runs to 1496 residues: Rap guanine nucleotide exchange factor 2 (1496 aa).

Disordered stretches follow at residues 40 to 59 (HVSS…SSSL) and 68 to 101 (SEAG…SDPL). The segment covering 83–94 (VDSEDDDDEEDI) has biased composition (acidic residues). Residue 135–254 (AFANMTMSVR…VEEEGEIVMV (120 aa)) participates in a nucleoside 3',5'-cyclic phosphate binding. Positions 267 to 380 (KGHIVIKGTS…RLLNIACAAK (114 aa)) constitute an N-terminal Ras-GEF domain. A PDZ domain is found at 385-470 (LMTLTKPSRE…ITVKTNLFVF (86 aa)). S501 bears the Phosphoserine mark. In terms of domain architecture, Ras-associating spans 606-692 (PDQVLRVFKA…GRYYLKNNME (87 aa)). Residue T644 is modified to Phosphothreonine; by PLK2. A Ras-GEF domain is found at 717-944 (STVEVATQLS…SQGSANATVL (228 aa)). S806 is subject to Phosphoserine; by PLK2. Residue S930 is modified to Phosphoserine. S933 and S1022 each carry phosphoserine; by PLK2. Residues 1002–1051 (PATSTLPKNPGDKKPVKSETSPVAPRAGPQQKVQPQQPLAQPQPPHKVSQ) are disordered. The span at 1030-1041 (PQQKVQPQQPLA) shows a compositional bias: low complexity. Phosphoserine occurs at positions 1079, 1088, 1094, 1115, 1119, and 1158. Residues 1093–1159 (GSLERHRKQA…RSSIVSNSSF (67 aa)) form a disordered region. Low complexity-rich tracts occupy residues 1110–1124 (SSQL…QSSP) and 1140–1159 (SDSG…NSSF). S1175 carries the post-translational modification Phosphoserine; by PLK2. 3 disordered regions span residues 1224–1256 (STEE…SGSH), 1303–1369 (STKY…EEAK), and 1390–1496 (RKEG…VSAV). A compositionally biased stretch (basic and acidic residues) spans 1227-1237 (ELSHDQGDRAS). Polar residues-rich tracts occupy residues 1246–1256 (GSWTSCSSGSH) and 1306–1330 (YNRQ…SSTG). Residues 1440–1455 (PTEAPAPGQTPPAAAA) show a composition bias toward low complexity. Acidic residues predominate over residues 1485–1496 (AEEDEDEQVSAV).

This sequence belongs to the RAPGEF2 family. As to quaternary structure, found in a complex, at least composed of KIDINS220, MAGI2, NTRK1 and RAPGEF2; the complex is mainly formed at late endosomes in a neuronal growth factor (NGF)-dependent manner. Interacts (via C-terminal domain) with NEDD4 (via WW domains); this interaction leads to ubiquitination and degradation via the proteasome pathway in a cAMP-independent manner. Interacts with MAGI1 (via PDZ domain). Interacts with ADRB1 (via C-terminal PDZ motif); the interaction is direct. Interacts (via Ras-associating domain) with RAP1A (via GTP-bound active form). Interacts weakly with HRAS (via GDP- and GTP-bound forms). Interacts (via C-terminal domain) with MAGI2 (via PDZ and WW domains). Interacts with CDH1, CTNNB1 and TJP1. Post-translationally, ubiquitinated by NEDD4, leading to proteasomal degradation. In terms of processing, phosphorylation by PLK2 promotes its activity. In terms of tissue distribution, expressed in all layers of the cerebral cortex, hippocampus and cerebellum. Expressed in the cortical plate, cingulate cortex and the subventricular zone. Expressed in neurons and endocrine cells (at protein level). Expressed in melanoma cells.

Its subcellular location is the cytoplasm. The protein resides in the perinuclear region. The protein localises to the cell membrane. It is found in the late endosome. It localises to the cell junction. Its function is as follows. Functions as a guanine nucleotide exchange factor (GEF), which activates Rap and Ras family of small GTPases by exchanging bound GDP for free GTP in a cAMP-dependent manner. Serves as a link between cell surface receptors and Rap/Ras GTPases in intracellular signaling cascades. Also acts as an effector for Rap1 by direct association with Rap1-GTP thereby leading to the amplification of Rap1-mediated signaling. Shows weak activity on HRAS. It is controversial whether RAPGEF2 binds cAMP and cGMP or not. Its binding to ligand-activated beta-1 adrenergic receptor ADRB1 leads to the Ras activation through the G(s)-alpha signaling pathway. Involved in the cAMP-induced Ras and Erk1/2 signaling pathway that leads to sustained inhibition of long term melanogenesis by reducing dendrite extension and melanin synthesis. Also provides inhibitory signals for cell proliferation of melanoma cells and promotes their apoptosis in a cAMP-independent nanner. Regulates cAMP-induced neuritogenesis by mediating the Rap1/B-Raf/ERK signaling through a pathway that is independent on both PKA and RAPGEF3/RAPGEF4. Involved in neuron migration and in the formation of the major forebrain fiber connections forming the corpus callosum, the anterior commissure and the hippocampal commissure during brain development. Involved in neuronal growth factor (NGF)-induced sustained activation of Rap1 at late endosomes and in brain-derived neurotrophic factor (BDNF)-induced axon outgrowth of hippocampal neurons. Plays a role in the regulation of embryonic blood vessel formation and in the establishment of basal junction integrity and endothelial barrier function. May be involved in the regulation of the vascular endothelial growth factor receptor KDR and cadherin CDH5 expression at allantois endothelial cell-cell junctions. The polypeptide is Rap guanine nucleotide exchange factor 2 (Rapgef2) (Mus musculus (Mouse)).